A 205-amino-acid chain; its full sequence is Carboxysome shell protein CsoS1D (205 aa).

BMC circularly permuted domains follow at residues 3-100 (ELRT…TREY) and 106-205 (VVMW…TCRS). Positions 68–69 (ER) match the Gates the pore motif.

The protein belongs to the EutL/PduB family. As to quaternary structure, homotrimer. Forms a dimer of stacked trimers, the same faces interact. Probably forms a CsoS1-CsoS1D-CsoS2 complex.

It is found in the carboxysome. Part of the carboxysome shell, a polyhedral inclusion where RuBisCO (ribulose bisphosphate carboxylase, cbbL-cbbS) is sequestered. It may control transport of RuBisCO reactants in and out of the carboxysome. The chain is Carboxysome shell protein CsoS1D from Hydrogenovibrio crunogenus (strain DSM 25203 / XCL-2) (Thiomicrospira crunogena).